Here is a 284-residue protein sequence, read N- to C-terminus: 2-dehydro-3-deoxyphosphooctonate aldolase (284 aa).

Belongs to the KdsA family.

It localises to the cytoplasm. It carries out the reaction D-arabinose 5-phosphate + phosphoenolpyruvate + H2O = 3-deoxy-alpha-D-manno-2-octulosonate-8-phosphate + phosphate. Its pathway is carbohydrate biosynthesis; 3-deoxy-D-manno-octulosonate biosynthesis; 3-deoxy-D-manno-octulosonate from D-ribulose 5-phosphate: step 2/3. It participates in bacterial outer membrane biogenesis; lipopolysaccharide biosynthesis. The polypeptide is 2-dehydro-3-deoxyphosphooctonate aldolase (Edwardsiella ictaluri (strain 93-146)).